A 72-amino-acid polypeptide reads, in one-letter code: Large ribosomal subunit protein bL28 (72 aa).

The protein belongs to the bacterial ribosomal protein bL28 family.

This Chlorobium limicola (strain DSM 245 / NBRC 103803 / 6330) protein is Large ribosomal subunit protein bL28.